Consider the following 657-residue polypeptide: Histidine ammonia-lyase (657 aa).

The 5-imidazolinone (Ala-Gly) cross-link spans 253–255; that stretch reads ASG. Serine 254 bears the 2,3-didehydroalanine (Ser) mark. Threonine 396 is modified (phosphothreonine). The residue at position 635 (serine 635) is a Phosphoserine. Threonine 637 carries the post-translational modification Phosphothreonine. Serine 648 carries the phosphoserine modification.

It belongs to the PAL/histidase family. Contains an active site 4-methylidene-imidazol-5-one (MIO), which is formed autocatalytically by cyclization and dehydration of residues Ala-Ser-Gly.

The enzyme catalyses L-histidine = trans-urocanate + NH4(+). Its pathway is amino-acid degradation; L-histidine degradation into L-glutamate; N-formimidoyl-L-glutamate from L-histidine: step 1/3. In Mus musculus (Mouse), this protein is Histidine ammonia-lyase (Hal).